The following is a 347-amino-acid chain: S-adenosylmethionine:tRNA ribosyltransferase-isomerase (347 aa).

The protein belongs to the QueA family. As to quaternary structure, monomer.

The protein localises to the cytoplasm. The enzyme catalyses 7-aminomethyl-7-carbaguanosine(34) in tRNA + S-adenosyl-L-methionine = epoxyqueuosine(34) in tRNA + adenine + L-methionine + 2 H(+). Its pathway is tRNA modification; tRNA-queuosine biosynthesis. Transfers and isomerizes the ribose moiety from AdoMet to the 7-aminomethyl group of 7-deazaguanine (preQ1-tRNA) to give epoxyqueuosine (oQ-tRNA). In Exiguobacterium sibiricum (strain DSM 17290 / CCUG 55495 / CIP 109462 / JCM 13490 / 255-15), this protein is S-adenosylmethionine:tRNA ribosyltransferase-isomerase.